The chain runs to 717 residues: Polyribonucleotide nucleotidyltransferase (717 aa).

Residues Asp487 and Asp493 each contribute to the Mg(2+) site. In terms of domain architecture, KH spans 554–613; it reads PKIITMAINPDKIRDVIGPSGKQINKIIEETGVKIDIEQDGTVFISSINQEMNEKAKKII. An S1 motif domain is found at 623 to 691; it reads GEIYLGKVKR…KQGRVNLSRK (69 aa).

This sequence belongs to the polyribonucleotide nucleotidyltransferase family. Mg(2+) is required as a cofactor.

It localises to the cytoplasm. It catalyses the reaction RNA(n+1) + phosphate = RNA(n) + a ribonucleoside 5'-diphosphate. Its function is as follows. Involved in mRNA degradation. Catalyzes the phosphorolysis of single-stranded polyribonucleotides processively in the 3'- to 5'-direction. This Bacillus mycoides (strain KBAB4) (Bacillus weihenstephanensis) protein is Polyribonucleotide nucleotidyltransferase.